The following is a 221-amino-acid chain: Octanoyltransferase (221 aa).

The region spanning 35 to 221 (ESYENRIIFC…RELLAALLSK (187 aa)) is the BPL/LPL catalytic domain. Residues 80–87 (RGGDITYH), 152–154 (AIG), and 165–167 (GLA) contribute to the substrate site. Cys-183 functions as the Acyl-thioester intermediate in the catalytic mechanism.

Belongs to the LipB family.

Its subcellular location is the cytoplasm. The catalysed reaction is octanoyl-[ACP] + L-lysyl-[protein] = N(6)-octanoyl-L-lysyl-[protein] + holo-[ACP] + H(+). Its pathway is protein modification; protein lipoylation via endogenous pathway; protein N(6)-(lipoyl)lysine from octanoyl-[acyl-carrier-protein]: step 1/2. In terms of biological role, catalyzes the transfer of endogenously produced octanoic acid from octanoyl-acyl-carrier-protein onto the lipoyl domains of lipoate-dependent enzymes. Lipoyl-ACP can also act as a substrate although octanoyl-ACP is likely to be the physiological substrate. This chain is Octanoyltransferase, found in Bacteroides fragilis (strain YCH46).